A 310-amino-acid polypeptide reads, in one-letter code: ADP-L-glycero-D-manno-heptose-6-epimerase (310 aa).

Residues 10-11 (FI), 31-32 (DN), Lys38, Lys53, 75-79 (EGACS), and Asn92 each bind NADP(+). Tyr140 serves as the catalytic Proton acceptor. Residue Lys144 coordinates NADP(+). Residue Asn169 participates in substrate binding. Residues Val170 and Lys178 each contribute to the NADP(+) site. Residue Lys178 is the Proton acceptor of the active site. Substrate is bound by residues Ser180, His187, 201-204 (FSGS), Arg209, and Tyr272.

The protein belongs to the NAD(P)-dependent epimerase/dehydratase family. HldD subfamily. Homopentamer. It depends on NADP(+) as a cofactor.

It catalyses the reaction ADP-D-glycero-beta-D-manno-heptose = ADP-L-glycero-beta-D-manno-heptose. It functions in the pathway nucleotide-sugar biosynthesis; ADP-L-glycero-beta-D-manno-heptose biosynthesis; ADP-L-glycero-beta-D-manno-heptose from D-glycero-beta-D-manno-heptose 7-phosphate: step 4/4. Functionally, catalyzes the interconversion between ADP-D-glycero-beta-D-manno-heptose and ADP-L-glycero-beta-D-manno-heptose via an epimerization at carbon 6 of the heptose. This is ADP-L-glycero-D-manno-heptose-6-epimerase from Pectobacterium atrosepticum (strain SCRI 1043 / ATCC BAA-672) (Erwinia carotovora subsp. atroseptica).